The sequence spans 403 residues: Phosphopentomutase (403 aa).

6 residues coordinate Mn(2+): aspartate 13, aspartate 298, histidine 303, aspartate 339, histidine 340, and histidine 351.

The protein belongs to the phosphopentomutase family. Requires Mn(2+) as cofactor.

It is found in the cytoplasm. It carries out the reaction 2-deoxy-alpha-D-ribose 1-phosphate = 2-deoxy-D-ribose 5-phosphate. It catalyses the reaction alpha-D-ribose 1-phosphate = D-ribose 5-phosphate. It participates in carbohydrate degradation; 2-deoxy-D-ribose 1-phosphate degradation; D-glyceraldehyde 3-phosphate and acetaldehyde from 2-deoxy-alpha-D-ribose 1-phosphate: step 1/2. Its function is as follows. Isomerase that catalyzes the conversion of deoxy-ribose 1-phosphate (dRib-1-P) and ribose 1-phosphate (Rib-1-P) to deoxy-ribose 5-phosphate (dRib-5-P) and ribose 5-phosphate (Rib-5-P), respectively. This is Phosphopentomutase from Streptococcus pyogenes serotype M5 (strain Manfredo).